A 208-amino-acid chain; its full sequence is Glutathione S-transferase 2 (208 aa).

The GST N-terminal domain maps to 1 to 78 (MSYKLTYFSI…HLARKYNLNG (78 aa)). Glutathione is bound by residues Tyr7, Lys42, 49–50 (QL), and 62–63 (QS). Residues 80–200 (NEMETTYIDM…YCEKRDAAKV (121 aa)) form the GST C-terminal domain.

Belongs to the GST superfamily. Pi family. Homodimer. As to expression, hypodermis, wall of the seminal receptacle and spermatozoa of adult worms.

It carries out the reaction RX + glutathione = an S-substituted glutathione + a halide anion + H(+). Its function is as follows. Appears to play a central role in the parasite detoxification system. This is Glutathione S-transferase 2 (GST2) from Onchocerca volvulus.